The chain runs to 86 residues: Progonadoliberin IIA (86 aa).

A signal peptide spans 1 to 24 (MVHICRLFVVMGMLLCLSAQFASS). The residue at position 25 (glutamine 25) is a Pyrrolidone carboxylic acid. The residue at position 34 (glycine 34) is a Glycine amide.

It belongs to the GnRH family. Olfactory bulbs, hypothalamus and telencephalon, midbrain and posterior brain areas.

The protein resides in the secreted. Stimulates the secretion of gonadotropins. This Carassius auratus (Goldfish) protein is Progonadoliberin IIA (gnrh2a).